A 430-amino-acid polypeptide reads, in one-letter code: MSGLARLRKTAFLMVSASANCRIQRYQSSRTEKHQDSTSANALLNHLIFKIKSTGPITVSEYMREVLTNPVKGYYMHHDMLGEHGDFVTSPELSQIFGELLGVWCISEWMSAGKPKSLQLVELGPGRGTLTDDLLRVFSNFGRLLNSCDISVHLVEVSPKLSDIQAQRLTGKAIEVELDKNSPVYKKGITKTGFPVCWYQDIQDVPTGFSFYIAHEFFDALPIHKLQKTKDGWREILIDIDPGIPDKLRFVLGPNVSLVANTFVQDDEPRDHVEVCPSAAVIIQKLANQINSYGGAALIADYGHMGERTDTFRGFRAHKLHDVLSNPGTADLTADVDFNFMRRIVGEAASCLGPVTQHEFLKNMGIDIRLKVLLEKSSDVAVQKQLIHGYNILMNADQMGQRFKFFSVVPQSRLKTTMPPVAGFSKLLMH.

The transit peptide at 1-31 (MSGLARLRKTAFLMVSASANCRIQRYQSSRT) directs the protein to the mitochondrion.

The protein belongs to the NDUFAF7 family.

Its subcellular location is the mitochondrion. It carries out the reaction L-arginyl-[protein] + 2 S-adenosyl-L-methionine = N(omega),N(omega)'-dimethyl-L-arginyl-[protein] + 2 S-adenosyl-L-homocysteine + 2 H(+). Arginine methyltransferase involved in the assembly or stability of mitochondrial NADH:ubiquinone oxidoreductase complex (complex I). Acts by mediating symmetric dimethylation of 'Arg-118' of ndufs2 after it assembles into the complex I, stabilizing the early intermediate complex. The sequence is that of Protein arginine methyltransferase NDUFAF7, mitochondrial from Xenopus tropicalis (Western clawed frog).